The sequence spans 338 residues: Solute carrier family 35 member G6 (338 aa).

The segment at M1–L25 is disordered. Transmembrane regions (helical) follow at residues L40–M60, L67–L87, Y105–V125, C160–L180, A190–Y210, T221–L241, C255–T275, L281–L301, and I310–C330. An EamA 1 domain is found at L49 to G174. The region spanning Y272–A325 is the EamA 2 domain.

It belongs to the SLC35G solute transporter family. As to expression, expressed in placenta and testis.

It localises to the membrane. The polypeptide is Solute carrier family 35 member G6 (SLC35G6) (Homo sapiens (Human)).